A 591-amino-acid polypeptide reads, in one-letter code: Aspartate--tRNA(Asp/Asn) ligase (591 aa).

Glu174 provides a ligand contact to L-aspartate. The aspartate stretch occupies residues 198-201; that stretch reads QLFK. Position 220 (Arg220) interacts with L-aspartate. Residues 220–222 and Gln229 each bind ATP; that span reads RDE. His450 is a binding site for L-aspartate. Glu483 is a binding site for ATP. L-aspartate is bound at residue Arg490. An ATP-binding site is contributed by 535-538; sequence GLDR.

This sequence belongs to the class-II aminoacyl-tRNA synthetase family. Type 1 subfamily. Homodimer.

The protein resides in the cytoplasm. The enzyme catalyses tRNA(Asx) + L-aspartate + ATP = L-aspartyl-tRNA(Asx) + AMP + diphosphate. Aspartyl-tRNA synthetase with relaxed tRNA specificity since it is able to aspartylate not only its cognate tRNA(Asp) but also tRNA(Asn). Reaction proceeds in two steps: L-aspartate is first activated by ATP to form Asp-AMP and then transferred to the acceptor end of tRNA(Asp/Asn). This Pseudomonas fluorescens (strain SBW25) protein is Aspartate--tRNA(Asp/Asn) ligase.